A 362-amino-acid chain; its full sequence is tRNA/tmRNA (uracil-C(5))-methyltransferase (362 aa).

5 residues coordinate S-adenosyl-L-methionine: Gln186, Tyr214, Asn219, Glu235, and Asp295. Cys320 acts as the Nucleophile in catalysis. Residue Glu354 is the Proton acceptor of the active site.

It belongs to the class I-like SAM-binding methyltransferase superfamily. RNA M5U methyltransferase family. TrmA subfamily.

The catalysed reaction is uridine(54) in tRNA + S-adenosyl-L-methionine = 5-methyluridine(54) in tRNA + S-adenosyl-L-homocysteine + H(+). It catalyses the reaction uridine(341) in tmRNA + S-adenosyl-L-methionine = 5-methyluridine(341) in tmRNA + S-adenosyl-L-homocysteine + H(+). Its function is as follows. Dual-specificity methyltransferase that catalyzes the formation of 5-methyluridine at position 54 (m5U54) in all tRNAs, and that of position 341 (m5U341) in tmRNA (transfer-mRNA). This is tRNA/tmRNA (uracil-C(5))-methyltransferase from Dechloromonas aromatica (strain RCB).